Consider the following 187-residue polypeptide: Decorin-binding protein B (187 aa).

The signal sequence occupies residues 1-20; sequence MKIGKLNSIVIALFFKLLVA.

Belongs to the decorin-binding protein family.

In terms of biological role, binds to decorin which may mediate the adherence of B.burgdorferi to collagen fibers in skin and other tissues. The sequence is that of Decorin-binding protein B (dbpB) from Borreliella burgdorferi (strain ATCC 35210 / DSM 4680 / CIP 102532 / B31) (Borrelia burgdorferi).